The chain runs to 288 residues: Leucine-rich repeat-containing protein 72 (288 aa).

LRR repeat units lie at residues 47-68 (DVFELFLSQKELTEVIDLSRFK), 69-90 (KLKYLWLHHNKLHGITFLTRNY), 91-112 (CLAELYLNNNAIFDIEGLHYLP), and 113-134 (SLHILLLHHNELINLDATVKEL). Residues 148-186 (NPLCQYNLYRLYIIYHLPGVELLDRNQVTEKERRSMITL) enclose the LRRCT domain.

The chain is Leucine-rich repeat-containing protein 72 (LRRC72) from Bos taurus (Bovine).